Reading from the N-terminus, the 60-residue chain is Large ribosomal subunit protein bL32 (60 aa).

Belongs to the bacterial ribosomal protein bL32 family.

The protein is Large ribosomal subunit protein bL32 of Streptococcus suis (strain 05ZYH33).